The primary structure comprises 452 residues: Probable cytosolic iron-sulfur protein assembly protein 1 (452 aa).

Residues 1 to 12 are compositionally biased toward pro residues; it reads MPPPTTPTPNPS. The disordered stretch occupies residues 1-24; the sequence is MPPPTTPTPNPSIPQKATLTPLPP. WD repeat units lie at residues 70–121, 161–200, 213–267, 273–319, 340–379, and 411–452; these read GHAR…DAAA, GHEN…QGGD, EHDG…EWVC, GHGG…FGGV, VHTR…EDVA, and YEVN…VRIS.

This sequence belongs to the WD repeat CIA1 family.

Functionally, essential component of the cytosolic iron-sulfur (Fe/S) protein assembly machinery. Required for the maturation of extramitochondrial Fe/S proteins. In Chaetomium globosum (strain ATCC 6205 / CBS 148.51 / DSM 1962 / NBRC 6347 / NRRL 1970) (Soil fungus), this protein is Probable cytosolic iron-sulfur protein assembly protein 1.